The following is a 421-amino-acid chain: 4-hydroxy-3-methylbut-2-en-1-yl diphosphate synthase (flavodoxin) (421 aa).

Residues cysteine 311, cysteine 314, cysteine 357, and glutamate 364 each contribute to the [4Fe-4S] cluster site.

This sequence belongs to the IspG family. Requires [4Fe-4S] cluster as cofactor.

It catalyses the reaction (2E)-4-hydroxy-3-methylbut-2-enyl diphosphate + oxidized [flavodoxin] + H2O + 2 H(+) = 2-C-methyl-D-erythritol 2,4-cyclic diphosphate + reduced [flavodoxin]. It functions in the pathway isoprenoid biosynthesis; isopentenyl diphosphate biosynthesis via DXP pathway; isopentenyl diphosphate from 1-deoxy-D-xylulose 5-phosphate: step 5/6. In terms of biological role, converts 2C-methyl-D-erythritol 2,4-cyclodiphosphate (ME-2,4cPP) into 1-hydroxy-2-methyl-2-(E)-butenyl 4-diphosphate. The chain is 4-hydroxy-3-methylbut-2-en-1-yl diphosphate synthase (flavodoxin) from Xanthomonas campestris pv. campestris (strain 8004).